A 359-amino-acid chain; its full sequence is 24-methylenesterol C-methyltransferase 3 (359 aa).

A helical transmembrane segment spans residues 4–24 (VALYCTAGLIAGAVYWFICVL).

The protein belongs to the class I-like SAM-binding methyltransferase superfamily. Erg6/SMT family.

It localises to the membrane. It carries out the reaction 24-methylidenelophenol + S-adenosyl-L-methionine = (Z)-24-ethylidenelophenol + S-adenosyl-L-homocysteine + H(+). The protein operates within steroid biosynthesis; sterol biosynthesis. Functionally, catalyzes the methyl transfer from S-adenosyl-methionine to the methylene group of 24-methylene lophenol to form 24-ethylidene lophenol. The protein is 24-methylenesterol C-methyltransferase 3 (SMT3) of Arabidopsis thaliana (Mouse-ear cress).